A 948-amino-acid polypeptide reads, in one-letter code: ATPase 2, plasma membrane-type (948 aa).

Ser-2 is modified (N-acetylserine). The Cytoplasmic segment spans residues 2–61; it reads SSLEDIKNETVDLEKIPIEEVFQQLKCSREGLTTQEGEDRIQIFGPNKLEEKKESKLLKF. Residues 62 to 81 traverse the membrane as a helical segment; the sequence is LGFMWNPLSWVMEMAAIMAI. The Extracellular portion of the chain corresponds to 82–93; sequence ALANGDGRPPDW. The helical transmembrane segment at 94–114 threads the bilayer; that stretch reads QDFVGIICLLVINSTISFIEE. Residues 115–243 lie on the Cytoplasmic side of the membrane; sequence NNAGNAAAAL…GHFQKVLTAI (129 aa). The helical transmembrane segment at 244 to 264 threads the bilayer; it reads GNFCICSIAIGMVIEIIVMYP. Topologically, residues 265–273 are extracellular; the sequence is IQRRKYRDG. A helical membrane pass occupies residues 274 to 291; the sequence is IDNLLVLLIGGIPIAMPT. At 292–643 the chain is on the cytoplasmic side; the sequence is VLSVTMAIGS…TSRAIFQRMK (352 aa). The active-site 4-aspartylphosphate intermediate is Asp-329. Mg(2+) is bound by residues Asp-588 and Asp-592. A helical membrane pass occupies residues 644-665; that stretch reads NYTIYAVSITIRIVFGFMLIAL. The Extracellular segment spans residues 666–670; it reads IWEFD. A helical membrane pass occupies residues 671-693; it reads FSAFMVLIIAILNDGTIMTISKD. Residues 694–709 lie on the Cytoplasmic side of the membrane; that stretch reads RVKPSPTPDSWKLKEI. The chain crosses the membrane as a helical span at residues 710–730; it reads FATGVVLGGYQAIMTVIFFWA. Residues 731–751 are Extracellular-facing; it reads AHKTDFFSDTFGVRSIRDNNH. The chain crosses the membrane as a helical span at residues 752–772; sequence ELMGAVYLQVSIISQALIFVT. Residues 773–784 are Cytoplasmic-facing; that stretch reads RSRSWSFVERPG. A helical membrane pass occupies residues 785 to 805; it reads ALLMIAFLIAQLIATLIAVYA. Residues 806–813 are Extracellular-facing; the sequence is NWEFAKIR. A helical transmembrane segment spans residues 814–834; the sequence is GIGWGWAGVIWLYSIVTYFPL. Topologically, residues 835–948 are cytoplasmic; that stretch reads DVFKFAIRYI…DIETPSHYTV (114 aa). The residue at position 881 (Thr-881) is a Phosphothreonine. Phosphoserine is present on Ser-899. At Ser-931 the chain carries Phosphoserine; by CIPK11. Residues 946-948 form an interaction with 14-3-3 proteins region; that stretch reads YTV. Residue Thr-947 is modified to Phosphothreonine.

Belongs to the cation transport ATPase (P-type) (TC 3.A.3) family. Type IIIA subfamily. Binds to 14-3-3 proteins. The binding is induced by phosphorylation of Thr-947 and it activates the H(+)-ATPase. Interacts (via the R-domain) with PSY1R (via C-terminus). Part of a functional complex containing PSKR1, BAK1, CNGC17, and AHA. Interacts with CNGC17 and PSKR1. Interacts with PP2C67/PP2C-D1 at the plasma membrane. Interacts with AHA1. Phosphorylated, probably by PHOT1 and PHOT2, at C-terminal Thr-947 in guard cells in response to blue light to induce stomatal opening. Post-translationally, phosphorylation at Thr-881 by PSY1R. This phosphorylation activates proton pumping. Decreased phosphorylation in response to flg22 elicitation. In terms of processing, phosphorylation at Ser-899 is specifically induced by RALF1, thus leading to the inhibition of proton transport. Increased phosphorylation in response to flg22 elicitation. Phosphorylation of Thr-947 induces the binding to 14-3-3 proteins, but phosphorylation of Ser-931 interferes with this binding no matter whether Thr-947 is phosphorylated or not. Decreased phosphorylation in response to flg22 elicitation. Phosphorylation of Thr-947 is enhanced by the presence of brassinolide (BL) via the BRI1-BIN2 pathway and prior the trigger of hypocotyl elongation. Inactivated by PP2C67/PP2C-D1-mediated Thr-947 dephosphorylation; SAUR19 inhibits the action of PP2C67/PP2C-D1 and thus promotes the active phosphorylated form. Post-translationally, abscisic acid induces dephosphorylation of AHA2 in etiolated seedlings, suppressing ATP hydrolysis and hypocotyl elongation. Higher levels in roots than in shoots. Expressed in epidermal and root cortex cells, in phloem, xylem and root hairs. Detected in cotyledons, leaves, hypocotyls, roots and root hairs. Expressed in guard cells and mesophyll cells.

The protein localises to the cell membrane. It catalyses the reaction ATP + H2O + H(+)(in) = ADP + phosphate + 2 H(+)(out). Its activity is regulated as follows. Regulated by an auto-inhibitory C-terminal domain that can be displaced by phosphorylation of Thr-947 and the subsequent binding of 14-3-3 proteins. Negatively regulated by PKS5. PKS5 phosphorylates Ser-931, inhibiting interaction with the activating 14-3-3 protein. Positively regulated by PSY1R. PSY1R phosphorylates Thr-881, situated in the auto-inhibitory region I of the C-terminal domain, causing pump activation. Negatively regulated by the secreted peptide RALF. After specific binding to FERONIA, RALF causes phosphorylation at Ser-899, mediating the inhibition of proton transport. Activated by lysophospholipids, without the involvement of phosphorylation of Thr-947. This activation is critically dependent on the single autoinhibitory residue Leu-919. Repressed by PP2C-D phosphatases (e.g. PP2C67/PP2C-D1 and PP2C64/PP2C-D5) which dephosphorylates Thr-947. Triggered by SAUR19 via phosphorylation of the C-terminal autoinhibitory domain (e.g. Thr-947), as a result of the inhibition of PP2C67/PP2C-D1. Phosphorylation on Thr residues is repressed by tyrphostin 9, sphingosine, GW5074 and BML-265. By contrast, the fungal phytotoxin fusicoccin (FC) promotes phosphorylation of Thr-947 independently to BHP, thus leading to large stomatal opening. Its function is as follows. The plasma membrane H(+) ATPase of plants and fungi generates a proton gradient that drives the active transport of nutrients by H(+)-symport. The resulting external acidification and/or internal alkinization may mediate growth responses. Involved in maintaining the membrane potential and delta-pH, together forming the plasma membrane protonmotive force (PMF) required for root and hypocotyl elongation and root tropism. Important for root growth and development during different nitrogen regimes. Forms a functional cation-translocating unit with CNGC17 that is activated by PSKR1/BAK1 and possibly other BAK1/RLK complexes. Promotes stomatal opening in response to blue light. The protein is ATPase 2, plasma membrane-type of Arabidopsis thaliana (Mouse-ear cress).